The following is an 800-amino-acid chain: MSSLGASFVQIKFDDLQFFENCGGGSFGSVYRAKWISQDKEVAVKKLLKIEKEAEILSVLSHRNIIQFYGVILEPPNYGIVTEYASLGSLYDYINSNRSEEMDMDHIMTWATDVAKGMHYLHMEAPVKVIHRDLKSRNVVIAADGVLKICDFGASRFHNHTTHMSLVGTFPWMAPEVIQSLPVSETCDTYSYGVVLWEMLTREVPFKGLEGLQVAWLVVEKNERLTIPSSCPRSFAELLHQCWEADAKKRPSFKQIISILESMSNDTSLPDKCNSFLHNKAEWRCEIEATLERLKKLERDLSFKEQELKERERRLKMWEQKLTEQSNTPLLPSFEIGAWTEDDVYCWVQQLVRKGDSSAEMSVYASLFKENNITGKRLLLLEEEDLKDMGIVSKGHIIHFKSAIEKLTHDYINLFHFPPLIKDSGGEPEENEEKIVNLELVFGFHLKPGTGPQDCKWKMYMEMDGDEIAITYIKDVTFNTNLPDAEILKMTKPPFVMEKWIVGIAKSQTVECTVTYESDVRTPKSTKHVHSIQWSRTKPQDEVKAVQLAIQTLFTNSDGNPGSRSDSSADCQWLDTLRMRQIASNTSLQRSQSNPILGSPFFSHFDGQDSYAAAVRRPQVPIKYQQITPVNQSRSSSPTQYGLTKNFSSLHLNSRDSGFSSGNTDTSSERGRYSDRSRNKYGRGSISLNSSPRGRYSGKSQHSTPSRGRYPGKFYRVSQSALNPHQSPDFKRSPRDLHQPNTIPGMPLHPETDSRASEEDSKVSEGGWTKVEYRKKPHRPSPAKTNKERARGDHRGWRNF.

Position 2 is an N-acetylserine (S2). Phosphoserine; by autocatalysis is present on residues S2, S3, and S7. The region spanning 16–277 is the Protein kinase domain; it reads LQFFENCGGG…SLPDKCNSFL (262 aa). ATP contacts are provided by residues 22 to 30 and K45; that span reads CGGGSFGSV. D133 acts as the Proton acceptor in catalysis. T161 is subject to Phosphothreonine; by autocatalysis. S165 carries the phosphoserine; by autocatalysis modification. Position 275 is a phosphoserine (S275). Residues 287–308 are leucine-zipper; that stretch reads IEATLERLKKLERDLSFKEQEL. S302 is subject to Phosphoserine; by autocatalysis. Phosphoserine is present on residues W339, E429, K434, D454, and S567. The SAM domain occupies 339 to 410; the sequence is WTEDDVYCWV…KSAIEKLTHD (72 aa). T586 bears the Phosphothreonine; by autocatalysis mark. Position 587 is a phosphoserine; by autocatalysis (S587). A phosphoserine mark is found at S593 and S599. Position 628 is a phosphothreonine (T628). 3 positions are modified to phosphoserine: S633, S637, and S648. Residues S649 and S660 each carry the phosphoserine; by autocatalysis modification. Over residues 652–666 the composition is skewed to polar residues; that stretch reads LNSRDSGFSSGNTDT. Positions 652–800 are disordered; sequence LNSRDSGFSS…RGDHRGWRNF (149 aa). Position 664 is a phosphothreonine; by autocatalysis (T664). Residues 667 to 678 show a composition bias toward basic and acidic residues; the sequence is SSERGRYSDRSR. Residues 670–713 are sensing domain (S); the sequence is RGRYSDRSRNKYGRGSISLNSSPRGRYSGKSQHSTPSRGRYPGK. S685 bears the Phosphoserine mark. Polar residues-rich tracts occupy residues 686–706 and 717–726; these read ISLN…STPS and VSQSALNPHQ. S718 and S720 each carry phosphoserine; by autocatalysis. S727 and S733 each carry phosphoserine. The span at 728 to 738 shows a compositional bias: basic and acidic residues; it reads PDFKRSPRDLH. A Phosphothreonine; by autocatalysis modification is found at T742. Basic and acidic residues-rich tracts occupy residues 750 to 763 and 785 to 800; these read PETD…DSKV and TNKE…WRNF. A C-terminal domain (CTD) region spans residues 774 to 800; it reads RKKPHRPSPAKTNKERARGDHRGWRNF.

Belongs to the protein kinase superfamily. STE Ser/Thr protein kinase family. MAP kinase kinase kinase subfamily. Homodimer. Interacts with ZNF33A. Component of a signaling complex containing at least AKAP13, PKN1, MAPK14, MAP3K20 and MAP2K3. Within this complex, AKAP13 interacts directly with PKN1, which in turn recruits MAPK14, MAP2K3 and MAP3K20. Interacts with EIF2AK4/GCN2; promoting EIF2AK4/GCN2 kinase activity. In terms of assembly, interacts with isoform ZAKbeta. As to quaternary structure, interacts with isoform ZAKalpha. The cofactor is Mg(2+). Post-translationally, activated by phosphorylation by PKN1, followed by autophosphorylation on Thr-161 and Ser-165. Autophosphorylation in response to ribotoxic stress promotes dissociation from colliding ribosomes and activation. As to expression, ubiquitously expressed. Isoform ZAKbeta is the predominant form in all tissues examined, except for liver, in which isoform ZAKalpha is more highly expressed.

It localises to the cytoplasm. Its subcellular location is the nucleus. It carries out the reaction L-seryl-[protein] + ATP = O-phospho-L-seryl-[protein] + ADP + H(+). The enzyme catalyses L-threonyl-[protein] + ATP = O-phospho-L-threonyl-[protein] + ADP + H(+). Activated in response to stress, such as ribosomal stress, osmotic shock and ionizing radiation. Activated by phosphorylation by PKN1, followed by autophosphorylation on Thr-161 and Ser-165. Inhibited by nilotinib, sorafenib, dabrafenib, rebastinib and vemurafenib. Selectively inhibited by N-(3)-((1H-Pyrazolo[3,4-b]pyridin-5-yl)ethynyl)benzenesulfonamide compound 3h. Selectively inhibited by 1,2,3-triazole benzenesulfonamides. Stress-activated component of a protein kinase signal transduction cascade that promotes programmed cell death in response to various stress, such as ribosomal stress, osmotic shock and ionizing radiation. Acts by catalyzing phosphorylation of MAP kinase kinases, leading to activation of the JNK (MAPK8/JNK1, MAPK9/JNK2 and/or MAPK10/JNK3) and MAP kinase p38 (MAPK11, MAPK12, MAPK13 and/or MAPK14) pathways. Activates JNK through phosphorylation of MAP2K4/MKK4 and MAP2K7/MKK7, and MAP kinase p38 gamma (MAPK12) via phosphorylation of MAP2K3/MKK3 and MAP2K6/MKK6. Involved in stress associated with adrenergic stimulation: contributes to cardiac decompensation during periods of acute cardiac stress. May be involved in regulation of S and G2 cell cycle checkpoint by mediating phosphorylation of CHEK2. Its function is as follows. Key component of the stress-activated protein kinase signaling cascade in response to ribotoxic stress or UV-B irradiation. Acts as the proximal sensor of ribosome collisions during the ribotoxic stress response (RSR): directly binds to the ribosome by inserting its flexible C-terminus into the ribosomal intersubunit space, thereby acting as a sentinel for colliding ribosomes. Upon ribosome collisions, activates either the stress-activated protein kinase signal transduction cascade or the integrated stress response (ISR), leading to programmed cell death or cell survival, respectively. Dangerous levels of ribosome collisions trigger the autophosphorylation and activation of MAP3K20, which dissociates from colliding ribosomes and phosphorylates MAP kinase kinases, leading to activation of the JNK and MAP kinase p38 pathways that promote programmed cell death. Less dangerous levels of ribosome collisions trigger the integrated stress response (ISR): MAP3K20 activates EIF2AK4/GCN2 independently of its protein-kinase activity, promoting EIF2AK4/GCN2-mediated phosphorylation of EIF2S1/eIF-2-alpha. Also part of the stress-activated protein kinase signaling cascade triggering the NLRP1 inflammasome in response to UV-B irradiation: ribosome collisions activate MAP3K20, which directly phosphorylates NLRP1, leading to activation of the NLRP1 inflammasome and subsequent pyroptosis. NLRP1 is also phosphorylated by MAP kinase p38 downstream of MAP3K20. Also acts as a histone kinase by phosphorylating histone H3 at 'Ser-28' (H3S28ph). In terms of biological role, isoform that lacks the C-terminal region that mediates ribosome-binding: does not act as a sensor of ribosome collisions in response to ribotoxic stress. May act as an antagonist of isoform ZAKalpha: interacts with isoform ZAKalpha, leading to decrease the expression of isoform ZAKalpha. In Homo sapiens (Human), this protein is Mitogen-activated protein kinase kinase kinase 20.